The chain runs to 329 residues: MKRKPEEQEGFVFVRKGKEKAGSKRRKSSVEDDPDTSQTDGLVELPVSDTPIVKRNKELRKGKGRRSSLDQRGKRASSIGTGFEALPHADVPSHEYYRHISKDLSEPLRIKQLLLWASSKALEEQRKKYGETEEASEAAIARSIVQEVLNELLANKVSVSWYQRPPDAVIPNKPHPQNLKNAQLVDELSAKLTQLHNEEAAWRAVAANSVSSDKSILSFKKAVESIDSKQDLDKQDSPLPPDDAPELPNISKLKPKFHTLLDMLAENIHTLHSLTNAGPEVRSSYGRLAAQDFIAHRKSLLSFSKYVDTMNLLRLLSEASYKSSSNESV.

2 disordered regions span residues 1-81 and 228-249; these read MKRK…SIGT and SKQD…ELPN. Positions 15–27 are enriched in basic residues; it reads RKGKEKAGSKRRK. The segment covering 55–73 has biased composition (basic and acidic residues); it reads RNKELRKGKGRRSSLDQRG.

Component of the NMS super complex which consists of mis12, mis13, mis14, ndc80, nnf1, nuf2, sos7, spc7, spc24 and spc25. Interacts with dis1, mal2, mis14, ppe1 and ekc1.

It is found in the nucleus. Acts as a component of the NMS (Ndc80-MIND-Spc7) super complex which has a role in kinetochore function during late meiotic prophase and throughout the mitotic cell cycle. Required for correct segregation of chromosomes and for maintaining the inner centromere structure. In Schizosaccharomyces pombe (strain 972 / ATCC 24843) (Fission yeast), this protein is Kinetochore protein mis13 (mis13).